The primary structure comprises 218 residues: Uracil-DNA glycosylase (218 aa).

Asp-60 functions as the Proton acceptor in the catalytic mechanism.

It belongs to the uracil-DNA glycosylase (UDG) superfamily. UNG family.

It localises to the cytoplasm. It carries out the reaction Hydrolyzes single-stranded DNA or mismatched double-stranded DNA and polynucleotides, releasing free uracil.. Functionally, excises uracil residues from the DNA which can arise as a result of misincorporation of dUMP residues by DNA polymerase or due to deamination of cytosine. The chain is Uracil-DNA glycosylase from Shewanella oneidensis (strain ATCC 700550 / JCM 31522 / CIP 106686 / LMG 19005 / NCIMB 14063 / MR-1).